Here is a 55-residue protein sequence, read N- to C-terminus: ATP synthase F(0) complex subunit 8 (55 aa).

The helical transmembrane segment at 4–24 (LNPSPWLLILLFSWLIFLTML) threads the bilayer. Positions 36–55 (MPSTQNMCKQEPEPWTWPWA) are disordered.

It belongs to the ATPase protein 8 family. As to quaternary structure, component of the ATP synthase complex composed at least of ATP5F1A/subunit alpha, ATP5F1B/subunit beta, ATP5MC1/subunit c (homooctomer), MT-ATP6/subunit a, MT-ATP8/subunit 8, ATP5ME/subunit e, ATP5MF/subunit f, ATP5MG/subunit g, ATP5MK/subunit k, ATP5MJ/subunit j, ATP5F1C/subunit gamma, ATP5F1D/subunit delta, ATP5F1E/subunit epsilon, ATP5PF/subunit F6, ATP5PB/subunit b, ATP5PD/subunit d, ATP5PO/subunit OSCP. ATP synthase complex consists of a soluble F(1) head domain (subunits alpha(3) and beta(3)) - the catalytic core - and a membrane F(0) domain - the membrane proton channel (subunits c, a, 8, e, f, g, k and j). These two domains are linked by a central stalk (subunits gamma, delta, and epsilon) rotating inside the F1 region and a stationary peripheral stalk (subunits F6, b, d, and OSCP).

The protein resides in the mitochondrion membrane. Its function is as follows. Subunit 8, of the mitochondrial membrane ATP synthase complex (F(1)F(0) ATP synthase or Complex V) that produces ATP from ADP in the presence of a proton gradient across the membrane which is generated by electron transport complexes of the respiratory chain. ATP synthase complex consist of a soluble F(1) head domain - the catalytic core - and a membrane F(1) domain - the membrane proton channel. These two domains are linked by a central stalk rotating inside the F(1) region and a stationary peripheral stalk. During catalysis, ATP synthesis in the catalytic domain of F(1) is coupled via a rotary mechanism of the central stalk subunits to proton translocation. In vivo, can only synthesize ATP although its ATP hydrolase activity can be activated artificially in vitro. Part of the complex F(0) domain. The polypeptide is ATP synthase F(0) complex subunit 8 (Latimeria chalumnae (Coelacanth)).